The chain runs to 119 residues: MSPRKTYILKLYVAGNTPNSMRALKTLRNILETEFKGVYALKVIDVLKNPQLAEEDKILATPTLSKILPPPVRRIIGDLSDRERVLIGLDLLYDELVDNDLNSSLMDALGVPDIEEADS.

The protein belongs to the KaiB family. In terms of assembly, the KaiABC complex composition changes during the circadian cycle to control KaiC phosphorylation. Complexes KaiC(6), KaiA(2-4):KaiC(6), KaiB(6):KaiC(6) and KaiC(6):KaiB(6):KaiA(12) are among the most important forms, many form cooperatively. Undergoes a major conformational rearrangment; in the free state forms homotetramers as a dimer of dimers. When bound to the CI domain of KaiC switches to a monomeric thioredoxin-fold (KaiB(fs)). KaiB(fs) binds CikA, leading it to dephosphorylate phospho-RpaA.

Its function is as follows. Key component of the KaiABC oscillator complex, which constitutes the main circadian regulator in cyanobacteria. Complex composition changes during the circadian cycle to control KaiC phosphorylation. KaiA stimulates KaiC autophosphorylation, while KaiB sequesters KaiA, leading to KaiC autodephosphorylation. Phospho-Ser-431 KaiC accumulation triggers binding of KaiB to form the KaiB(6):KaiC(6) complex, leading to changes in output regulators CikA and SasA. KaiB switches to a thioredoxin-like fold (KaiB(fs)) when bound to KaiC. KaiB(6):KaiC(6) formation exposes a site for KaiA binding that sequesters KaiA from KaiC, making the KaiC(6):KaiB(6):KaiA(12) complex that results in KaiC autodephosphorylation. In terms of biological role, a metamorphic protein which reversibly switches between an inactive tetrameric fold and a rare, thioredoxin-like monomeric fold (KaiB(fs)). KaiB(fs) binds phospho-KaiC, KaiA and CikA. KaiA and CikA compete for binding to KaiB(fs), and KaiB(fs) and SasA compete for binding to KaiC, thus the clock oscillator and output signal pathway are tightly coupled. This Synechococcus sp. (strain CC9311) protein is Circadian clock oscillator protein KaiB.